The chain runs to 313 residues: MDDNGDVHFCHRATAVVALLLLHLVVVANAAAHSCDWCTPRHSTVSILPTPTHAAHLTGGACGFGAAPMELNVAAVTADLFRHGHACGACYQLRCRDRRLCGEDGVKVVVADMAKQPEQEGEMNRTAGGSLQFRITEDAFAAMAKQGVSAHELTRQRTLEVDFRRIPCEYRESRRLAVRVEEASRNPTHLAIRFLYQGGQTDIAAVEIAQANATPPSSSYYSSWRYMTRRDGAPGVWTTSRAPVGPLRLRVVVTAGSGGKWLRSDGEVLPADWRPGEVYDTGLRVTDVAVRSCSLSCAIQDMDSDDGEEEELR.

Residues 1–30 form the signal peptide; it reads MDDNGDVHFCHRATAVVALLLLHLVVVANA. The region spanning 59–173 is the Expansin-like EG45 domain; it reads GGACGFGAAP…RRIPCEYRES (115 aa). Residue Asn-124 is glycosylated (N-linked (GlcNAc...) asparagine). The Expansin-like CBD domain occupies 188–281; the sequence is THLAIRFLYQ…DWRPGEVYDT (94 aa).

It belongs to the expansin family. Expansin-like A subfamily.

The protein localises to the secreted. This chain is Expansin-like A4 (EXLA4), found in Oryza sativa subsp. japonica (Rice).